Here is a 206-residue protein sequence, read N- to C-terminus: Putative cryptic phosphonate transport system permease protein PhnE1 (206 aa).

The next 3 helical transmembrane spans lie at 30 to 50 (WFSL…WQGA), 92 to 112 (IAVW…LMSA), and 137 to 157 (MVFA…GVLA).

If the reading frame is restored, the complex is composed of two ATP-binding proteins (PhnC), two transmembrane proteins (PhnE) and a solute-binding protein (PhnD).

It is found in the cell inner membrane. In terms of biological role, N-terminal fragment of the PhnE protein, part of a phosphonate usage operon that is cryptic in K12 strains. Growth of K12 strains on phosphonate can be observed when it is used as the sole phosphorus source after a 60 hour lag period, suggesting the operon is activated. An intact PhnE in strain B is (AC A0A140NFA3). Part of the binding-protein-dependent transport system for phosphonates; probably responsible for the translocation of the substrate across the membrane. The chain is Putative cryptic phosphonate transport system permease protein PhnE1 (phnE1) from Escherichia coli (strain K12).